The chain runs to 140 residues: ATP synthase epsilon chain (140 aa).

It belongs to the ATPase epsilon chain family. In terms of assembly, F-type ATPases have 2 components, CF(1) - the catalytic core - and CF(0) - the membrane proton channel. CF(1) has five subunits: alpha(3), beta(3), gamma(1), delta(1), epsilon(1). CF(0) has three main subunits: a, b and c.

Its subcellular location is the cell inner membrane. Functionally, produces ATP from ADP in the presence of a proton gradient across the membrane. This chain is ATP synthase epsilon chain, found in Yersinia enterocolitica serotype O:8 / biotype 1B (strain NCTC 13174 / 8081).